A 194-amino-acid chain; its full sequence is Imidazoleglycerol-phosphate dehydratase (194 aa).

It belongs to the imidazoleglycerol-phosphate dehydratase family.

Its subcellular location is the cytoplasm. The enzyme catalyses D-erythro-1-(imidazol-4-yl)glycerol 3-phosphate = 3-(imidazol-4-yl)-2-oxopropyl phosphate + H2O. It functions in the pathway amino-acid biosynthesis; L-histidine biosynthesis; L-histidine from 5-phospho-alpha-D-ribose 1-diphosphate: step 6/9. This chain is Imidazoleglycerol-phosphate dehydratase, found in Oceanobacillus iheyensis (strain DSM 14371 / CIP 107618 / JCM 11309 / KCTC 3954 / HTE831).